A 902-amino-acid polypeptide reads, in one-letter code: Protein translocase subunit SecA (902 aa).

Residues Gln87, 105–109 (GEGKT), and Asp512 contribute to the ATP site. Residues 850-902 (RLAKQQQLSHEVTKESQMSAVDGQVASGKKVGRNEPCPCGSGKKYKHCHGKLG) are disordered. Positions 853 to 868 (KQQQLSHEVTKESQMS) are enriched in polar residues. 4 residues coordinate Zn(2+): Cys886, Cys888, Cys897, and His898. Positions 892–902 (KKYKHCHGKLG) are enriched in basic residues.

The protein belongs to the SecA family. Monomer and homodimer. Part of the essential Sec protein translocation apparatus which comprises SecA, SecYEG and auxiliary proteins SecDF-YajC and YidC. Zn(2+) is required as a cofactor.

The protein resides in the cell inner membrane. The protein localises to the cytoplasm. The enzyme catalyses ATP + H2O + cellular proteinSide 1 = ADP + phosphate + cellular proteinSide 2.. Its function is as follows. Part of the Sec protein translocase complex. Interacts with the SecYEG preprotein conducting channel. Has a central role in coupling the hydrolysis of ATP to the transfer of proteins into and across the cell membrane, serving both as a receptor for the preprotein-SecB complex and as an ATP-driven molecular motor driving the stepwise translocation of polypeptide chains across the membrane. This is Protein translocase subunit SecA from Proteus mirabilis (strain HI4320).